Consider the following 79-residue polypeptide: MENIEQRVKKIVAEQLGVNESEIKNESSFVDDLGADSLDTVELVMALEEEFECEIPDEEAEKITTVQQAIDYVNAHLKK.

The Carrier domain occupies 2–77; it reads ENIEQRVKKI…QAIDYVNAHL (76 aa). An O-(pantetheine 4'-phosphoryl)serine modification is found at Ser37.

This sequence belongs to the acyl carrier protein (ACP) family. Post-translationally, 4'-phosphopantetheine is transferred from CoA to a specific serine of apo-ACP by AcpS. This modification is essential for activity because fatty acids are bound in thioester linkage to the sulfhydryl of the prosthetic group.

Its subcellular location is the cytoplasm. The protein operates within lipid metabolism; fatty acid biosynthesis. In terms of biological role, carrier of the growing fatty acid chain in fatty acid biosynthesis. In Azoarcus sp. (strain BH72), this protein is Acyl carrier protein.